The following is a 540-amino-acid chain: ADP,ATP carrier protein 2 (540 aa).

12 consecutive transmembrane segments (helical) span residues 23–43 (FSKFIPLFFLAFFVGVNYALL), 61–81 (VIPFLKVWGIVPGAVIVTMIY), 93–113 (VFISLVGGFLGFFALFATVIY), 150–170 (LYYVMSELWSSIVLSTLFWGV), 185–205 (ALINTGLNLSSVFAGEVSLWL), 222–242 (EVLLNITLLIVLAGGVILYLY), 292–312 (LLGIAVVVLSYNLVIHLFEVV), 334–354 (ITTLTGIVSALTGIFAAGQTI), 361–381 (IGALVPPLTMLITGALFFGAI), 389–409 (MIFGGILGISPLVLTAWLGGV), 455–475 (SGGSLVYQGLLIIFSSVAASL), and 477–497 (AITIVLLLALGSWIFVIAWLG).

Belongs to the ADP/ATP translocase tlc family.

It localises to the cell membrane. The protein is ADP,ATP carrier protein 2 (tlcB) of Chlamydia trachomatis serovar D (strain ATCC VR-885 / DSM 19411 / UW-3/Cx).